The chain runs to 454 residues: Cobyrinate a,c-diamide synthase (454 aa).

Residues 247-442 form the GATase cobBQ-type domain; sequence KIGIAMDSAF…IHAHWASNPN (196 aa). C329 (nucleophile) is an active-site residue.

It belongs to the CobB/CbiA family. Mg(2+) is required as a cofactor.

The enzyme catalyses cob(II)yrinate + 2 L-glutamine + 2 ATP + 2 H2O = cob(II)yrinate a,c diamide + 2 L-glutamate + 2 ADP + 2 phosphate + 2 H(+). The protein operates within cofactor biosynthesis; adenosylcobalamin biosynthesis; cob(II)yrinate a,c-diamide from sirohydrochlorin (anaerobic route): step 10/10. Catalyzes the ATP-dependent amidation of the two carboxylate groups at positions a and c of cobyrinate, using either L-glutamine or ammonia as the nitrogen source. The sequence is that of Cobyrinate a,c-diamide synthase from Leptospira interrogans serogroup Icterohaemorrhagiae serovar copenhageni (strain Fiocruz L1-130).